Here is a 107-residue protein sequence, read N- to C-terminus: uncharacterized protein (107 aa).

The next 3 membrane-spanning stretches (helical) occupy residues 16-36 (VIPCTLSSPSFVLMAVISESL), 47-67 (IISLIESAVTSLSYVTWHSLV), and 85-105 (LIVLVQALHVIPCTASITSLI).

The protein resides in the membrane. This is an uncharacterized protein from Saccharomyces cerevisiae (strain ATCC 204508 / S288c) (Baker's yeast).